Here is a 313-residue protein sequence, read N- to C-terminus: MATSANLDIGAQLIVEECPSSYSLSGMPDIKIEHQPDSSAEEGSAQGVAMGMKFILPNRFDMNVCSRFVKSLNEEDSKNIQDQVNSDLEVASVLFKAECNIHTSPSPGIQVRHVYTPSTTKHFSPIKQSTTLTNKHRGNEVSTTPLLANSLSVHQLAAQGEMLYLATRIEQENVINHTDEEGFTPLMWAAAHGQIAVVEFLLQNGADPQLLGKGRESALSLACSKGYTDIVKMLLDCGVDVNEYDWNGGTPLLYAVHGNHVKCVKMLLENGADPTIETDSGYNSMDLAVALGYRSVQQVIESHLLKLLQNIKE.

ANK repeat units follow at residues 148–180 (ANSLSVHQLAAQGEMLYLATRIEQENVINHTDE), 181–213 (EGFTPLMWAAAHGQIAVVEFLLQNGADPQLLGK), 214–246 (GRESALSLACSKGYTDIVKMLLDCGVDVNEYDW), 247–279 (NGGTPLLYAVHGNHVKCVKMLLENGADPTIETD), and 280–313 (SGYNSMDLAVALGYRSVQQVIESHLLKLLQNIKE).

Interacts (via ANK repeats) with CCDC8 (via PxLPxI/L motif); mediates the interaction with the 3M complex which is composed of CCDC8, CUL7 and OBSL1. Interacts (via ANK repeats) with HDAC4 (via PxLPxI/L motif). Interacts (via ANK repeats) with HDAC5 (via PxLPxI/L motif). Interacts (via ANK repeats) with LRP2/megalin (via PxLPxI/L motif). Interacts (via ANK repeats) with RFX7 (via PxLPxI/L motif). Interacts with AHRR. Interacts with NEK6.

The protein resides in the cytoplasm. It is found in the cytoskeleton. Its subcellular location is the membrane. Functionally, may regulate the interaction between the 3M complex and the histone deacetylases HDAC4 and HDAC5. May also regulate LRP2/megalin. The sequence is that of Ankyrin repeat family A protein 2 (ANKRA2) from Bos taurus (Bovine).